A 95-amino-acid polypeptide reads, in one-letter code: Putative pterin-4-alpha-carbinolamine dehydratase (95 aa).

Belongs to the pterin-4-alpha-carbinolamine dehydratase family.

It carries out the reaction (4aS,6R)-4a-hydroxy-L-erythro-5,6,7,8-tetrahydrobiopterin = (6R)-L-erythro-6,7-dihydrobiopterin + H2O. In Solibacter usitatus (strain Ellin6076), this protein is Putative pterin-4-alpha-carbinolamine dehydratase.